A 42-amino-acid polypeptide reads, in one-letter code: Photosystem I reaction center subunit IX (42 aa).

Residues 7–27 (YLSVAPVLSTLWFGSLAGLLI) traverse the membrane as a helical segment.

Belongs to the PsaJ family.

It localises to the plastid. The protein resides in the chloroplast thylakoid membrane. May help in the organization of the PsaE and PsaF subunits. The chain is Photosystem I reaction center subunit IX from Lepidium virginicum (Virginia pepperweed).